The sequence spans 844 residues: Beta-mannosidase B (844 aa).

The Proton donor role is filled by Glu432. Asn723 is a glycosylation site (N-linked (GlcNAc...) asparagine).

This sequence belongs to the glycosyl hydrolase 2 family. Beta-mannosidase B subfamily.

The enzyme catalyses Hydrolysis of terminal, non-reducing beta-D-mannose residues in beta-D-mannosides.. It functions in the pathway glycan metabolism; N-glycan degradation. Exoglycosidase that cleaves the single beta-linked mannose residue from the non-reducing end of beta-mannosidic oligosaccharides of various complexity and length. Prefers mannobiose over mannotriose and has no activity against polymeric mannan. Is also severely restricted by galactosyl substitutions at the +1 subsite. The protein is Beta-mannosidase B (mndB) of Aspergillus flavus (strain ATCC 200026 / FGSC A1120 / IAM 13836 / NRRL 3357 / JCM 12722 / SRRC 167).